The chain runs to 385 residues: Rhomboid domain-containing protein 3 (385 aa).

5 consecutive transmembrane segments (helical) span residues 13–33 (ALPL…LLGA), 58–78 (LGHT…TLGW), 95–115 (VLAL…VSGA), 146–166 (WLLP…PPFL), and 168–188 (LLCG…WLEL). Residues 238 to 264 (PPYLASSDSWPHSDGSAQLPPRLGPGQ) are disordered. One can recognise a UBA domain in the interval 322-361 (SVSSLRLQQLQHMGFPTEQAAVALAATGRVEGAVSLLVEG).

The protein resides in the membrane. This Mus musculus (Mouse) protein is Rhomboid domain-containing protein 3 (Rhbdd3).